A 324-amino-acid polypeptide reads, in one-letter code: tRNA N6-adenosine threonylcarbamoyltransferase (324 aa).

Residues His-107, His-111, and Tyr-127 each coordinate Fe cation. Residues Tyr-127–Gly-131, Asp-159, Gly-172, Glu-176, and Asn-257 contribute to the substrate site. Residue Asp-285 participates in Fe cation binding.

Belongs to the KAE1 / TsaD family. As to quaternary structure, monomer. Component of the KEOPS complex that consists of Kae1, Bud32, Cgi121 and Pcc1; the whole complex dimerizes. Fe(2+) serves as cofactor.

Its subcellular location is the cytoplasm. The catalysed reaction is L-threonylcarbamoyladenylate + adenosine(37) in tRNA = N(6)-L-threonylcarbamoyladenosine(37) in tRNA + AMP + H(+). Required for the formation of a threonylcarbamoyl group on adenosine at position 37 (t(6)A37) in tRNAs that read codons beginning with adenine. Is a component of the KEOPS complex that is probably involved in the transfer of the threonylcarbamoyl moiety of threonylcarbamoyl-AMP (TC-AMP) to the N6 group of A37. Kae1 likely plays a direct catalytic role in this reaction, but requires other protein(s) of the complex to fulfill this activity. In vitro, binds tRNA, ssRNA, both single- and double-stranded DNA, and exhibits a low ATPase activity. This is tRNA N6-adenosine threonylcarbamoyltransferase from Pyrococcus abyssi (strain GE5 / Orsay).